The sequence spans 74 residues: Large ribosomal subunit protein bL31 (74 aa).

Positions 16, 18, 37, and 40 each coordinate Zn(2+).

This sequence belongs to the bacterial ribosomal protein bL31 family. Type A subfamily. In terms of assembly, part of the 50S ribosomal subunit. Zn(2+) serves as cofactor.

In terms of biological role, binds the 23S rRNA. This Koribacter versatilis (strain Ellin345) protein is Large ribosomal subunit protein bL31.